The following is a 648-amino-acid chain: Macrolide export ATP-binding/permease protein MacB (648 aa).

Residues 5-243 (LELCNVSRSY…QGVDAAVVNT (239 aa)) form the ABC transporter domain. Residue 41–48 (GVSGSGKS) participates in ATP binding. The next 5 membrane-spanning stretches (helical) occupy residues 273 to 293 (LLTM…VVVG), 417 to 437 (ANVV…IGVA), 523 to 543 (LFLT…VMNI), 577 to 597 (VLVC…IAFM), and 611 to 631 (LTAL…FGWL).

The protein belongs to the ABC transporter superfamily. Macrolide exporter (TC 3.A.1.122) family. Homodimer. Part of the tripartite efflux system MacAB-TolC, which is composed of an inner membrane transporter, MacB, a periplasmic membrane fusion protein, MacA, and an outer membrane component, TolC. The complex forms a large protein conduit and can translocate molecules across both the inner and outer membranes. Interacts with MacA.

It localises to the cell inner membrane. Functionally, part of the tripartite efflux system MacAB-TolC. MacB is a non-canonical ABC transporter that contains transmembrane domains (TMD), which form a pore in the inner membrane, and an ATP-binding domain (NBD), which is responsible for energy generation. Confers resistance against macrolides. The protein is Macrolide export ATP-binding/permease protein MacB of Salmonella typhimurium (strain LT2 / SGSC1412 / ATCC 700720).